The sequence spans 220 residues: Superoxide dismutase [Fe] (220 aa).

The Fe cation site is built by histidine 26, histidine 73, aspartate 164, and histidine 168.

The protein belongs to the iron/manganese superoxide dismutase family. In terms of assembly, homodimer. Fe cation serves as cofactor.

It catalyses the reaction 2 superoxide + 2 H(+) = H2O2 + O2. Destroys superoxide anion radicals which are normally produced within the cells and which are toxic to biological systems. The chain is Superoxide dismutase [Fe] (sodB) from Campylobacter coli.